The sequence spans 444 residues: Type II NADH:quinone oxidoreductase (444 aa).

FAD-binding positions include 8-12, N38, and S120; that span reads GGGAG. NAD(+)-binding positions include 186 to 191 and G285; that span reads VGGGAT. The FAD site is built by D325 and A341.

It belongs to the NADH dehydrogenase family. FAD is required as a cofactor.

It is found in the cell inner membrane. The catalysed reaction is a quinone + NADH + H(+) = a quinol + NAD(+). It carries out the reaction a ubiquinone + NADH + H(+) = a ubiquinol + NAD(+). In terms of biological role, alternative, nonproton pumping NADH:quinone oxidoreductase that delivers electrons to the respiratory chain by oxidation of NADH and reduction of quinones. Utilizes NADH exclusively, and electron flow from NADH to ubiquinone does not generate an electrochemical gradient. The protein is Type II NADH:quinone oxidoreductase (ndh) of Haemophilus influenzae (strain ATCC 51907 / DSM 11121 / KW20 / Rd).